Here is a 73-residue protein sequence, read N- to C-terminus: Translation initiation factor IF-1 (73 aa).

The 73-residue stretch at 1–73 (MAKKDGVIEL…ARGRIVYRYK (73 aa)) folds into the S1-like domain.

The protein belongs to the IF-1 family. As to quaternary structure, component of the 30S ribosomal translation pre-initiation complex which assembles on the 30S ribosome in the order IF-2 and IF-3, IF-1 and N-formylmethionyl-tRNA(fMet); mRNA recruitment can occur at any time during PIC assembly.

The protein localises to the cytoplasm. Its function is as follows. One of the essential components for the initiation of protein synthesis. Stabilizes the binding of IF-2 and IF-3 on the 30S subunit to which N-formylmethionyl-tRNA(fMet) subsequently binds. Helps modulate mRNA selection, yielding the 30S pre-initiation complex (PIC). Upon addition of the 50S ribosomal subunit IF-1, IF-2 and IF-3 are released leaving the mature 70S translation initiation complex. The polypeptide is Translation initiation factor IF-1 (Tropheryma whipplei (strain TW08/27) (Whipple's bacillus)).